Consider the following 139-residue polypeptide: Mannose-specific lectin (139 aa).

The Bulb-type lectin domain maps to 1-109 (DNILYSGETL…ARWATGTNIH (109 aa)). Residues Gln-26, Asp-28, Asn-30, Tyr-34, Asp-37, Lys-38, Trp-41, Ala-42, Asn-44, Gln-57, Asp-59, Asn-61, Tyr-65, Ile-72, Trp-73, Asn-76, Asn-83, Gln-89, Asp-91, Asn-93, Tyr-97, and Trp-102 each coordinate alpha-D-mannopyranose. A disulfide bridge links Cys-29 with Cys-52.

In terms of assembly, homotetramer; antiparallel. As to expression, detected in bulbs (at protein level).

The protein resides in the secreted. Mannose-specific lectin. Displays antiviral activity and therefore may contribute to defense against infections. Shows agglutinating activity towards rabbit erythrocytes. The polypeptide is Mannose-specific lectin (Narcissus tazetta (Cream narcissus)).